Here is a 130-residue protein sequence, read N- to C-terminus: MMKITLKKGILGFENLKEYELLDIENEDILKEFNSTEEDCIGFIVVSPFEIIKEYEIVLNQETIEKLEVKSPNDIMLLNIITVGQTLEESTVNMKAPIVINVRNNCGMQIILQDEEYSIWHPLLRGDGGC.

Belongs to the FliW family. As to quaternary structure, interacts with translational regulator CsrA and flagellin(s).

The protein resides in the cytoplasm. Functionally, acts as an anti-CsrA protein, binds CsrA and prevents it from repressing translation of its target genes, one of which is flagellin. Binds to flagellin and participates in the assembly of the flagellum. The chain is Flagellar assembly factor FliW from Clostridioides difficile (strain 630) (Peptoclostridium difficile).